The sequence spans 1411 residues: MKSLLDLFKQFTPDEHFDAIRIGMASPEKIRSWSFGEVKKPETINYRTFKPERDGLFCAKIFGPIKDYECLCGKYKRLKHRGVICEKCGVEVTQTKVRRERMGHIDLAAPCAHIWFLKSLPSRLGMVLDMTLRDIERVLYFEAYVVTDPGMTALKKLSIMSEEDYEAKRKEYGDEFIAKMGAEGIKDLLESIDIDLSIEKLRGDLTGSEVKVKKNAKRLKVLEAFKKSGIKPEWMVLQVLPVLPPDLRPLVPLDGGRFATSDLNDLYRRVINRNSRLRRLLELKAPEIIARNEKRMLQEAVDSLLDNGRRGKAMTGANKRALKSLADMIKGKSGRFRQNLLGKRVDYSGRSVITVGPTLKLHQCGLPKLMALELFKPFIFSRLEAMGIATTIKAAKKEVESGTPVVWDILEEVIKEHPVMLNRAPTLHRLGIQAFEPILIEGKAIQLHPLVCSAFNADFDGDQMAVHVPLSVEAQMEARTLMLASNNVLFPASGEPSIVPSQDVVLGLYYATRDRINGKGEGLVFADTGEVQRAFDAGEVELAARITVRLTEWSKPKDSDALVPTTALVETTAGRALLSEILPPGLPFSYVNKALKKKEISRLINVSFRKCGLKATVVFADKLLQNGFRLATRAGISIAIDDMLVPPQKAGIIERSEREVKEFEQQYVSGLVTAGERYNKVVDIWGKAGDEVSKAMMAQLSKEQVIDRHGQQVSQESFNSIYMMADSGARGSAAQIRQVAGMRGLMAKPDGSIIETPITANFREGLNVLEYFISTHGARKGLADTALKTANSGYLTRRLVDVTQDLVVTEEDCETANGSLMRAIVEGGEVIESLRDRILGRTAAEEVLHPENRMVLVPVGVMLDEDLIEELEAAGVDEVKVRTALTCETRYGLCAKCYGRDLGRGGLINLGEAVGVIAAQSIGEPGTQLTMRTFHIGGAASRAVIASRVEAKSNGVIGFSSTMRYVSNTKGELVVIARSGEIVIHDEYGRERERHKVPYGATLTVNADQNVKAGTVLAKWEPLTRPIITEFAGRTKFENVEEGLTVARQLDEVTGLSTLVVIDPKRRGAAKVVRPQVKLIDAQGNEVKIPGTDHSVTIGFQVGALIQVRDGQDVGPGEVLARIPVEGQKTRDITGGLPRVAELFEARTPKDKGTLAEMTGTVSFGKETKGKVRLQITDPEGHVFEELVPKEKNILVHEGQVVNKGESIVDGPADPQDILRLLGIEELSRYIVDEVQDVYRLQGVKINDKHIEVIVRQMLRRVVVEDAGESNYISGEQVERSEILNTNEALRAAGKIPAVYSNLLLGITKASLSTDSFISAASFQETTRVLTEAAIMGKRDELRGLKENVIVGRLIPAGTGLAYHQARKAKDAMDDAERRAIADAEAAEMAAQAEVPELDGSSVTASDAAAD.

Zn(2+)-binding residues include Cys70, Cys72, Cys85, and Cys88. Positions 458, 460, and 462 each coordinate Mg(2+). Cys813, Cys887, Cys894, and Cys897 together coordinate Zn(2+). The segment at 1391 to 1411 (AQAEVPELDGSSVTASDAAAD) is disordered.

The protein belongs to the RNA polymerase beta' chain family. In terms of assembly, the RNAP catalytic core consists of 2 alpha, 1 beta, 1 beta' and 1 omega subunit. When a sigma factor is associated with the core the holoenzyme is formed, which can initiate transcription. It depends on Mg(2+) as a cofactor. The cofactor is Zn(2+).

The enzyme catalyses RNA(n) + a ribonucleoside 5'-triphosphate = RNA(n+1) + diphosphate. Functionally, DNA-dependent RNA polymerase catalyzes the transcription of DNA into RNA using the four ribonucleoside triphosphates as substrates. The protein is DNA-directed RNA polymerase subunit beta' of Verminephrobacter eiseniae (strain EF01-2).